Here is a 153-residue protein sequence, read N- to C-terminus: Flagellar assembly factor FliW (153 aa).

Belongs to the FliW family. In terms of assembly, interacts with translational regulator CsrA and flagellin(s).

It localises to the cytoplasm. Functionally, acts as an anti-CsrA protein, binds CsrA and prevents it from repressing translation of its target genes, one of which is flagellin. Binds to flagellin and participates in the assembly of the flagellum. The protein is Flagellar assembly factor FliW of Leptospira biflexa serovar Patoc (strain Patoc 1 / Ames).